Consider the following 218-residue polypeptide: Octanoyltransferase (218 aa).

One can recognise a BPL/LPL catalytic domain in the interval 32-211 (INTYDEIWFL…KLSQLLNVSI (180 aa)). Residues 75–82 (RGGQITYH), 142–144 (SLG), and 155–157 (GLS) each bind substrate. Catalysis depends on C173, which acts as the Acyl-thioester intermediate.

This sequence belongs to the LipB family.

The protein localises to the cytoplasm. It carries out the reaction octanoyl-[ACP] + L-lysyl-[protein] = N(6)-octanoyl-L-lysyl-[protein] + holo-[ACP] + H(+). Its pathway is protein modification; protein lipoylation via endogenous pathway; protein N(6)-(lipoyl)lysine from octanoyl-[acyl-carrier-protein]: step 1/2. Catalyzes the transfer of endogenously produced octanoic acid from octanoyl-acyl-carrier-protein onto the lipoyl domains of lipoate-dependent enzymes. Lipoyl-ACP can also act as a substrate although octanoyl-ACP is likely to be the physiological substrate. This chain is Octanoyltransferase, found in Buchnera aphidicola subsp. Schizaphis graminum (strain Sg).